The sequence spans 169 residues: 3-hydroxyanthranilate 3,4-dioxygenase (169 aa).

O2 is bound at residue R44. Residues H48, E54, and H92 each contribute to the Fe cation site. A substrate-binding site is contributed by E54. Residues R96 and E106 each contribute to the substrate site. A divalent metal cation-binding residues include C121, C124, C158, and C160.

It belongs to the 3-HAO family. Requires Fe(2+) as cofactor.

Its subcellular location is the cytoplasm. It catalyses the reaction 3-hydroxyanthranilate + O2 = (2Z,4Z)-2-amino-3-carboxymuconate 6-semialdehyde. Its pathway is cofactor biosynthesis; NAD(+) biosynthesis; quinolinate from L-kynurenine: step 3/3. Catalyzes the oxidative ring opening of 3-hydroxyanthranilate to 2-amino-3-carboxymuconate semialdehyde, which spontaneously cyclizes to quinolinate. The protein is 3-hydroxyanthranilate 3,4-dioxygenase of Meyerozyma guilliermondii (strain ATCC 6260 / CBS 566 / DSM 6381 / JCM 1539 / NBRC 10279 / NRRL Y-324) (Yeast).